The following is a 94-amino-acid chain: DASH complex subunit DAD5 (94 aa).

The segment covering 1–20 (MRRSTIVPTSRTSSSSPSPS) has biased composition (low complexity). Positions 1–25 (MRRSTIVPTSRTSSSSPSPSQMKSF) are disordered.

Belongs to the DASH complex HSK3 family. Component of the DASH complex consisting of ask1, dad1, dad2, dad3, dad4, dam1, duo1, dad5, spc19 and spc34, with a stoichiometry of one copy of each subunit per complex. Multiple DASH complexes oligomerize to form a ring that encircles spindle microtubules and organizes the rod-like NDC80 complexes of the outer kinetochore. DASH complex oligomerization strengthens microtubule attachments. On cytoplasmic microtubules, DASH complexes appear to form patches instead of rings.

It is found in the nucleus. It localises to the cytoplasm. The protein resides in the cytoskeleton. Its subcellular location is the spindle. The protein localises to the chromosome. It is found in the centromere. It localises to the kinetochore. In terms of biological role, component of the DASH complex that connects microtubules with kinetochores and couples microtubule depolymerisation to chromosome movement; it is involved in retrieving kinetochores to the spindle poles before their re-orientation on the spindle in early mitosis and allows microtubule depolymerization to pull chromosomes apart and resist detachment during anaphase. Kinetochores, consisting of a centromere-associated inner segment and a microtubule-contacting outer segment, play a crucial role in chromosome segregation by mediating the physical connection between centromeric DNA and microtubules. Kinetochores also serve as an input point for the spindle assembly checkpoint, which delays anaphase until all chromosomes have bioriented on the mitotic spindle. The DASH complex mediates bipolar kinetochore-microtubule attachments and facilitates the formation of additional interactions between outer kinetochore components and spindle microtubules. During chromosome movement along the microtubule, it is required both for the sliding of kinetochores along the lateral side of the microtubule and also for microtubule end-on pulling on the kinetochore. Modulates cytoplasmic microtubule dynamics by tracking the plus-end of shortening microtubules and slowing their depolymerization. The protein is DASH complex subunit DAD5 of Schizosaccharomyces pombe (strain 972 / ATCC 24843) (Fission yeast).